A 635-amino-acid polypeptide reads, in one-letter code: Threonine--tRNA ligase (635 aa).

A TGS domain is found at 1 to 61 (MIKITLKDGK…HKDSSLEILT (61 aa)). The tract at residues 242-532 (DHRKLGKELD…LIEQYAGAFP (291 aa)) is catalytic. Cys-333, His-384, and His-509 together coordinate Zn(2+).

The protein belongs to the class-II aminoacyl-tRNA synthetase family. As to quaternary structure, homodimer. The cofactor is Zn(2+).

The protein localises to the cytoplasm. It carries out the reaction tRNA(Thr) + L-threonine + ATP = L-threonyl-tRNA(Thr) + AMP + diphosphate + H(+). Functionally, catalyzes the attachment of threonine to tRNA(Thr) in a two-step reaction: L-threonine is first activated by ATP to form Thr-AMP and then transferred to the acceptor end of tRNA(Thr). Also edits incorrectly charged L-seryl-tRNA(Thr). The polypeptide is Threonine--tRNA ligase (Clostridium botulinum (strain Langeland / NCTC 10281 / Type F)).